A 127-amino-acid chain; its full sequence is Small ribosomal subunit protein uS13 (127 aa).

A compositionally biased stretch (basic residues) spans 95–118 (GLPVRGQRTHTNARTRKGPKKGLV). The disordered stretch occupies residues 95 to 127 (GLPVRGQRTHTNARTRKGPKKGLVRKAAAPAPK).

The protein belongs to the universal ribosomal protein uS13 family. In terms of assembly, part of the 30S ribosomal subunit. Forms a loose heterodimer with protein S19. Forms two bridges to the 50S subunit in the 70S ribosome.

Its function is as follows. Located at the top of the head of the 30S subunit, it contacts several helices of the 16S rRNA. In the 70S ribosome it contacts the 23S rRNA (bridge B1a) and protein L5 of the 50S subunit (bridge B1b), connecting the 2 subunits; these bridges are implicated in subunit movement. Contacts the tRNAs in the A and P-sites. The protein is Small ribosomal subunit protein uS13 of Anaeromyxobacter sp. (strain Fw109-5).